The chain runs to 465 residues: MKVYNTLTNKKEEFLTLVPGEVKMYVCGPTVYNFFHIGNARTFVVFDTIRRYLEYRGYKVKFIQNFTDIDDKMIKRANEEGSTVKELGDRFIKEYYKDADDLNIERATKNPRATEFMEEIIKFVSDLIEKGYAYEIDGDVYFSTKKFNSYGKLSGQNLEELQLGARINVDERKKDPMDFAIWKSQKPGEPAWESPWGMGRPGWHIECSCMAYNLLGETIDIHAGGSDLSFPHHENEIAQSEARTGKQFAKYWLHSAFVNVNNQKMSKSLNNFFTAREILEKYDADVLRMFMLSGHYRTQINFSMELLDSTKSALDRLYNSINNLENLLDEVKNEELRDEELEYKNELQKYKEKYIEKMDDDFNTADAISVIFDLIRDVNTNVTIESSKELVKYTLDLIRELGSPLGILQESTKASLEEEIEKLIEERQKARKEKNWALADKIRDNLKERGIVLEDTPQGVRWKQI.

Cysteine 27 is a Zn(2+) binding site. The 'HIGH' region signature appears at 29-39 (PTVYNFFHIGN). Cysteine 207, histidine 232, and glutamate 236 together coordinate Zn(2+). Positions 264–268 (KMSKS) match the 'KMSKS' region motif. An ATP-binding site is contributed by lysine 267.

It belongs to the class-I aminoacyl-tRNA synthetase family. As to quaternary structure, monomer. Requires Zn(2+) as cofactor.

It is found in the cytoplasm. The enzyme catalyses tRNA(Cys) + L-cysteine + ATP = L-cysteinyl-tRNA(Cys) + AMP + diphosphate. The protein is Cysteine--tRNA ligase of Clostridium botulinum (strain Kyoto / Type A2).